The following is a 122-amino-acid chain: Small ribosomal subunit protein uS13 (122 aa).

The disordered stretch occupies residues 94–122; it reads KGLPVRGQRTHTNARTRKGPRRAIAGKKK.

Belongs to the universal ribosomal protein uS13 family. As to quaternary structure, part of the 30S ribosomal subunit. Forms a loose heterodimer with protein S19. Forms two bridges to the 50S subunit in the 70S ribosome.

Functionally, located at the top of the head of the 30S subunit, it contacts several helices of the 16S rRNA. In the 70S ribosome it contacts the 23S rRNA (bridge B1a) and protein L5 of the 50S subunit (bridge B1b), connecting the 2 subunits; these bridges are implicated in subunit movement. Contacts the tRNAs in the A and P-sites. In Syntrophus aciditrophicus (strain SB), this protein is Small ribosomal subunit protein uS13.